A 331-amino-acid polypeptide reads, in one-letter code: Beta-ketoacyl-[acyl-carrier-protein] synthase III (331 aa).

Residues C115 and H255 contribute to the active site. Residues 256–260 (QANFR) form an ACP-binding region. The active site involves N285.

This sequence belongs to the thiolase-like superfamily. FabH family. In terms of assembly, homodimer.

It is found in the cytoplasm. The enzyme catalyses malonyl-[ACP] + acetyl-CoA + H(+) = 3-oxobutanoyl-[ACP] + CO2 + CoA. It participates in lipid metabolism; fatty acid biosynthesis. Functionally, catalyzes the condensation reaction of fatty acid synthesis by the addition to an acyl acceptor of two carbons from malonyl-ACP. Catalyzes the first condensation reaction which initiates fatty acid synthesis and may therefore play a role in governing the total rate of fatty acid production. Possesses both acetoacetyl-ACP synthase and acetyl transacylase activities. Its substrate specificity determines the biosynthesis of branched-chain and/or straight-chain of fatty acids. This chain is Beta-ketoacyl-[acyl-carrier-protein] synthase III, found in Helicobacter pylori (strain Shi470).